Here is a 452-residue protein sequence, read N- to C-terminus: tRNA modification GTPase MnmE (452 aa).

(6S)-5-formyl-5,6,7,8-tetrahydrofolate-binding residues include R23, E80, and K119. Residues 215–374 enclose the TrmE-type G domain; that stretch reads GIWIALVGQP…LQQGLLEMIG (160 aa). Residue N225 coordinates K(+). GTP-binding positions include 225–230, 244–250, and 269–272; these read NVGKSS, TEVPGTT, and DTAG. S229 contacts Mg(2+). Positions 244, 246, and 249 each coordinate K(+). T250 is a Mg(2+) binding site. Position 452 (K452) interacts with (6S)-5-formyl-5,6,7,8-tetrahydrofolate.

This sequence belongs to the TRAFAC class TrmE-Era-EngA-EngB-Septin-like GTPase superfamily. TrmE GTPase family. In terms of assembly, homodimer. Heterotetramer of two MnmE and two MnmG subunits. The cofactor is K(+).

The protein localises to the cytoplasm. In terms of biological role, exhibits a very high intrinsic GTPase hydrolysis rate. Involved in the addition of a carboxymethylaminomethyl (cmnm) group at the wobble position (U34) of certain tRNAs, forming tRNA-cmnm(5)s(2)U34. The protein is tRNA modification GTPase MnmE of Nitrosospira multiformis (strain ATCC 25196 / NCIMB 11849 / C 71).